A 323-amino-acid chain; its full sequence is Small ribosomal subunit protein uS9m (323 aa).

Positions Thr298–Arg323 are disordered. Positions Val304 to Arg323 are enriched in basic residues.

The protein belongs to the universal ribosomal protein uS9 family.

The protein localises to the mitochondrion. This chain is Small ribosomal subunit protein uS9m (MRPS9), found in Debaryomyces hansenii (strain ATCC 36239 / CBS 767 / BCRC 21394 / JCM 1990 / NBRC 0083 / IGC 2968) (Yeast).